A 371-amino-acid polypeptide reads, in one-letter code: Queuine tRNA-ribosyltransferase (371 aa).

The active-site Proton acceptor is the Asp92. Residues 92–96, Asp147, Gln190, and Gly217 each bind substrate; that span reads DSGGF. An RNA binding region spans residues 248–254; it reads GVGKPID. Asp267 functions as the Nucleophile in the catalytic mechanism. Residues 272–276 form an RNA binding; important for wobble base 34 recognition region; the sequence is TRSGR.

The protein belongs to the queuine tRNA-ribosyltransferase family. In terms of assembly, homodimer. Within each dimer, one monomer is responsible for RNA recognition and catalysis, while the other monomer binds to the replacement base PreQ1.

It catalyses the reaction 7-aminomethyl-7-carbaguanine + guanosine(34) in tRNA = 7-aminomethyl-7-carbaguanosine(34) in tRNA + guanine. The protein operates within tRNA modification; tRNA-queuosine biosynthesis. Functionally, catalyzes the base-exchange of a guanine (G) residue with the queuine precursor 7-aminomethyl-7-deazaguanine (PreQ1) at position 34 (anticodon wobble position) in tRNAs with GU(N) anticodons (tRNA-Asp, -Asn, -His and -Tyr). Catalysis occurs through a double-displacement mechanism. The nucleophile active site attacks the C1' of nucleotide 34 to detach the guanine base from the RNA, forming a covalent enzyme-RNA intermediate. The proton acceptor active site deprotonates the incoming PreQ1, allowing a nucleophilic attack on the C1' of the ribose to form the product. After dissociation, two additional enzymatic reactions on the tRNA convert PreQ1 to queuine (Q), resulting in the hypermodified nucleoside queuosine (7-(((4,5-cis-dihydroxy-2-cyclopenten-1-yl)amino)methyl)-7-deazaguanosine). In Caulobacter vibrioides (strain ATCC 19089 / CIP 103742 / CB 15) (Caulobacter crescentus), this protein is Queuine tRNA-ribosyltransferase.